Consider the following 326-residue polypeptide: Adenosine receptor A1 (326 aa).

Over 1–10 (MPHSVSAFQA) the chain is Extracellular. A helical transmembrane segment spans residues 11–33 (AYIGIEVLIALVSVPGNVLVIWA). At 34–46 (VKVNQALRDATFC) the chain is on the cytoplasmic side. The chain crosses the membrane as a helical span at residues 47-69 (FIASLAVADVAVGALVIPLAILI). Residues 70 to 80 (NIGPQTYFHTC) are Extracellular-facing. Cys80 and Cys169 are disulfide-bonded. The helical transmembrane segment at 81–102 (LMVACPVLILTQSSILALLAIA) threads the bilayer. The Cytoplasmic portion of the chain corresponds to 103-123 (VDRYLRVKIPLRYKTVVTPRR). A helical membrane pass occupies residues 124-146 (AAVAIAGCWILSLVVGLTPMFGW). The Extracellular segment spans residues 147-176 (NNLSKIEMAWAANGSVGEPVIKCEFEKVIS). Asn159 is a glycosylation site (N-linked (GlcNAc...) asparagine). Residues 177–201 (MEYMVYFNFFVWVLPPLLLMVLIYL) traverse the membrane as a helical segment. The Cytoplasmic portion of the chain corresponds to 202 to 235 (EVFYLIRKQLSKKVSASSGDPQKYYGKELKIAKS). A helical transmembrane segment spans residues 236-259 (LALILFLFALSWLPLHILNCITLF). Residues 260-267 (CPTCHKPT) lie on the Extracellular side of the membrane. A helical membrane pass occupies residues 268-292 (ILTYIAIFLTHGNSAMNPIVYAFRI). Over 293 to 326 (QKFRVTFLKIWNDHFRCQPEPPIDEDLPEEKVDD) the chain is Cytoplasmic. A lipid anchor (S-palmitoyl cysteine) is attached at Cys309.

It belongs to the G-protein coupled receptor 1 family.

The protein localises to the cell membrane. Receptor for adenosine. The activity of this receptor is mediated by G proteins which inhibit adenylyl cyclase. The protein is Adenosine receptor A1 (ADORA1) of Cavia porcellus (Guinea pig).